The sequence spans 890 residues: Nitrate reductase [NADH] 2 (890 aa).

Cys-165 serves as a coordination point for Mo-molybdopterin. Positions 513–588 constitute a Cytochrome b5 heme-binding domain; that stretch reads SKMFSVSEVK…LEDYRIGELI (76 aa). His-548 and His-571 together coordinate heme. Residues 634 to 746 enclose the FAD-binding FR-type domain; the sequence is RQKIPCKLVS…KGPLGHIEYT (113 aa). FAD contacts are provided by residues 686 to 689, 703 to 707, Phe-708, Phe-715, 720 to 722, and Thr-773; these read RAYT, LIKVY, and LMS.

It belongs to the nitrate reductase family. Homodimer. FAD serves as cofactor. Heme is required as a cofactor. It depends on Mo-molybdopterin as a cofactor.

It carries out the reaction nitrite + NAD(+) + H2O = nitrate + NADH + H(+). Its function is as follows. Nitrate reductase is a key enzyme involved in the first step of nitrate assimilation in plants, fungi and bacteria. The protein is Nitrate reductase [NADH] 2 (NIA2) of Phaseolus vulgaris (Kidney bean).